Consider the following 115-residue polypeptide: uncharacterized protein (115 aa).

3 consecutive transmembrane segments (helical) span residues 7–27, 40–60, and 72–92; these read TLIF…IWFD, YALT…LLAA, and IVLV…YFYL.

Its subcellular location is the cell membrane. This is an uncharacterized protein from Haemophilus influenzae (strain ATCC 51907 / DSM 11121 / KW20 / Rd).